Consider the following 24-residue polypeptide: 12 kDa protein (24 aa).

The sequence is that of 12 kDa protein from Mycolicibacterium smegmatis (Mycobacterium smegmatis).